The sequence spans 185 residues: Elongation factor P (185 aa).

Belongs to the elongation factor P family.

Its subcellular location is the cytoplasm. Its pathway is protein biosynthesis; polypeptide chain elongation. Its function is as follows. Involved in peptide bond synthesis. Stimulates efficient translation and peptide-bond synthesis on native or reconstituted 70S ribosomes in vitro. Probably functions indirectly by altering the affinity of the ribosome for aminoacyl-tRNA, thus increasing their reactivity as acceptors for peptidyl transferase. The protein is Elongation factor P of Bacillus pumilus (strain SAFR-032).